The following is a 177-amino-acid chain: MSRVAKAPVVIPAGVDVKIDGQVITIKGKNGELTRTLNNAVEVKHADNALTFGPRDGFVDGWAQAGTARALLNSMVVGVTEGFTKKLQLVGVGYRAAIKGNAVGLSLGFSHPVEHPLPAGITAECPTQTEIVLKGADKQLIGQVAADLRAYRRPEPYKGKGVRYADEVVRTKEAKKK.

This sequence belongs to the universal ribosomal protein uL6 family. Part of the 50S ribosomal subunit.

This protein binds to the 23S rRNA, and is important in its secondary structure. It is located near the subunit interface in the base of the L7/L12 stalk, and near the tRNA binding site of the peptidyltransferase center. This chain is Large ribosomal subunit protein uL6, found in Enterobacter sp. (strain 638).